Consider the following 507-residue polypeptide: Maturase K (507 aa).

It belongs to the intron maturase 2 family. MatK subfamily.

The protein resides in the plastid. It is found in the chloroplast. Functionally, usually encoded in the trnK tRNA gene intron. Probably assists in splicing its own and other chloroplast group II introns. The polypeptide is Maturase K (Nymphaea alba (White water-lily)).